The following is a 329-amino-acid chain: Two pore potassium channel protein sup-9 (329 aa).

Residues 1-8 (MKRQNIRT) are Cytoplasmic-facing. Residues 9-29 (LSLIVCTLTYLLVGAAVFDAL) traverse the membrane as a helical segment. Residue N53 is glycosylated (N-linked (GlcNAc...) asparagine). The pore-forming intramembrane region spans 80–100 (FSGAFYFATTVITTIGYGHST). Residues 93–98 (TIGYGH) carry the Selectivity filter motif. A helical membrane pass occupies residues 108 to 128 (VFCMLYALAGIPLGLIMFQSI). Residues 129–157 (GERMNTFAAKLLRFIRRAAGKQPIVTSSD) lie on the Cytoplasmic side of the membrane. Residues 158–178 (LIIFCTGWGGLLIFGGAFMFS) form a helical membrane-spanning segment. Residue N182 is glycosylated (N-linked (GlcNAc...) asparagine). Positions 186–206 (FDAVYYCFVTLTTIGFGDYVA) form an intramembrane region, pore-forming. The Selectivity filter motif lies at 198 to 203 (TIGFGD). Residues 220–240 (VFFSLVFILFGLTVISAAMNL) traverse the membrane as a helical segment. Topologically, residues 241-329 (LVLRFLTMNT…FSGMTTRPKY (89 aa)) are cytoplasmic. Residues 289-296 (SLASCSCY) are may be important for regulation by and/or interaction with sup-10. A disordered region spans residues 307-329 (HRKHTEPHGGPPTFSGMTTRPKY).

Belongs to the two pore domain potassium channel (TC 1.A.1.8) family. May form a complex with the regulatory subunits unc-93 and sup-10. In terms of tissue distribution, low levels along surface of body-wall muscle cells, in vulval and intestinal muscles and, more weakly, in anal depressor and sphincter muscles. Also expressed in a subset of head neurons.

Its subcellular location is the membrane. Functionally, potassium channel involved in coordination of muscle contraction. Activity is regulated by sup-18. The chain is Two pore potassium channel protein sup-9 from Caenorhabditis elegans.